A 521-amino-acid chain; its full sequence is MSSDSLTPKDTIVPEEQTNQLRQPDLDEDSIHYDPEADDLESLETTASYASTSVSAKVYTKKEVNKGTDIESQPHWGENTSSTHDSDKEEDSNEEIESFPEGGFKAWVVTFGCFLGLIACFGLLNSTGVIESHLQDNQLSSESVSTIGWLFSLFLFVCSASCIISGTYFDRNGFRTIMIVGTVFHVAGLFATANSTKYWHFILSFAIVCGFGNGIVLSPLVSVPAHYFFKRRGTALAMATIGGSVGGVVFPIMLRSFFSMKSDTDPTYGFVWGIRTLGFLDLALLTLSIILVKERLPHVIENSKDGESRWRYILRVYILQCFDAKAFLDMKYLFCVLGTVFSELSINSALTYYGSYATSHGISANDAYTLIMIINVCGIPGRWVPGYLSDKFGRFNVAIATLLTLFIVMFVGWLPFGTNLTNMYVISALYGFCSGSVFSLLPVCCGQISKTEEFGKRYSTMYFVVGFGTLVGIPITGAIISIKTTADYQHYIIFCGLATFVSAVCYIISRAYCVGFKWVRF.

Disordered regions lie at residues 1–33 and 65–96; these read MSSD…SIHY and NKGT…NEEI. Residues 1 to 103 are Cytoplasmic-facing; it reads MSSDSLTPKD…EEIESFPEGG (103 aa). Residues 104–124 traverse the membrane as a helical segment; the sequence is FKAWVVTFGCFLGLIACFGLL. A glycan (N-linked (GlcNAc...) asparagine) is linked at Asn-125. The Extracellular segment spans residues 125 to 143; it reads NSTGVIESHLQDNQLSSES. A helical transmembrane segment spans residues 144 to 164; it reads VSTIGWLFSLFLFVCSASCII. At 165–172 the chain is on the cytoplasmic side; sequence SGTYFDRN. Residues 173–193 traverse the membrane as a helical segment; the sequence is GFRTIMIVGTVFHVAGLFATA. N-linked (GlcNAc...) asparagine glycosylation occurs at Asn-194. Over 194–200 the chain is Extracellular; it reads NSTKYWH. Residues 201–221 form a helical membrane-spanning segment; sequence FILSFAIVCGFGNGIVLSPLV. At 222 to 233 the chain is on the cytoplasmic side; sequence SVPAHYFFKRRG. Residues 234–254 form a helical membrane-spanning segment; sequence TALAMATIGGSVGGVVFPIML. Residues 255–269 are Extracellular-facing; it reads RSFFSMKSDTDPTYG. The helical transmembrane segment at 270-290 threads the bilayer; sequence FVWGIRTLGFLDLALLTLSII. The Cytoplasmic portion of the chain corresponds to 291-325; that stretch reads LVKERLPHVIENSKDGESRWRYILRVYILQCFDAK. The helical transmembrane segment at 326–346 threads the bilayer; the sequence is AFLDMKYLFCVLGTVFSELSI. Over 347 to 367 the chain is Extracellular; that stretch reads NSALTYYGSYATSHGISANDA. A helical membrane pass occupies residues 368–388; the sequence is YTLIMIINVCGIPGRWVPGYL. The Cytoplasmic segment spans residues 389–396; the sequence is SDKFGRFN. A helical membrane pass occupies residues 397 to 417; it reads VAIATLLTLFIVMFVGWLPFG. Topologically, residues 418–422 are extracellular; the sequence is TNLTN. Asn-419 carries an N-linked (GlcNAc...) asparagine glycan. A helical transmembrane segment spans residues 423–443; that stretch reads MYVISALYGFCSGSVFSLLPV. The Cytoplasmic segment spans residues 444–461; the sequence is CCGQISKTEEFGKRYSTM. Residues 462–482 form a helical membrane-spanning segment; the sequence is YFVVGFGTLVGIPITGAIISI. Residues 483–487 are Extracellular-facing; the sequence is KTTAD. Residues 488–508 form a helical membrane-spanning segment; sequence YQHYIIFCGLATFVSAVCYII. Residues 509-521 are Cytoplasmic-facing; that stretch reads SRAYCVGFKWVRF.

The protein belongs to the major facilitator superfamily. Monocarboxylate porter (TC 2.A.1.13) family.

Its subcellular location is the cell membrane. In terms of biological role, riboflavin transporter involved in riboflavin (vitamin B2) uptake. Does not act in the transport of monocarboxylic acids across the plasma membrane. The chain is Riboflavin transporter MCH5 (MCH5) from Saccharomyces cerevisiae (strain ATCC 204508 / S288c) (Baker's yeast).